Consider the following 447-residue polypeptide: 3-phosphoshikimate 1-carboxyvinyltransferase (447 aa).

The interval 1–22 (MTPSLKRLSGAMRARPAPALSG) is disordered. 3-phosphoshikimate is bound by residues lysine 30, serine 31, and arginine 35. Position 30 (lysine 30) interacts with phosphoenolpyruvate. Phosphoenolpyruvate-binding residues include glycine 102 and arginine 130. 3-phosphoshikimate contacts are provided by serine 173, glutamine 175, aspartate 325, and lysine 352. Phosphoenolpyruvate is bound at residue glutamine 175. Aspartate 325 (proton acceptor) is an active-site residue. Residues arginine 356 and arginine 401 each contribute to the phosphoenolpyruvate site.

Belongs to the EPSP synthase family. As to quaternary structure, monomer.

It localises to the cytoplasm. The catalysed reaction is 3-phosphoshikimate + phosphoenolpyruvate = 5-O-(1-carboxyvinyl)-3-phosphoshikimate + phosphate. It participates in metabolic intermediate biosynthesis; chorismate biosynthesis; chorismate from D-erythrose 4-phosphate and phosphoenolpyruvate: step 6/7. Its function is as follows. Catalyzes the transfer of the enolpyruvyl moiety of phosphoenolpyruvate (PEP) to the 5-hydroxyl of shikimate-3-phosphate (S3P) to produce enolpyruvyl shikimate-3-phosphate and inorganic phosphate. The chain is 3-phosphoshikimate 1-carboxyvinyltransferase from Maricaulis maris (strain MCS10) (Caulobacter maris).